Reading from the N-terminus, the 827-residue chain is Xanthomonalisin (827 aa).

An N-terminal signal peptide occupies residues 1-23 (MKIEKTALTVAIALAMSSLSAHA). A propeptide spans 24–237 (EDAWVSTHTQ…GPNVGTQAAA (214 aa)) (removed in mature form). The Peptidase S53 domain occupies 241-625 (AHHPQDFAAI…GKLNTYAQAN (385 aa)). Residues glutamate 312, aspartate 316, and serine 544 each act as charge relay system in the active site. 5 residues coordinate Ca(2+): aspartate 585, valine 586, alanine 601, glycine 603, and aspartate 605. The 88-residue stretch at 635–722 (TNAPPVANFS…VTVSSSGGTG (88 aa)) folds into the PKD domain. Positions 636–827 (NAPPVANFSV…GVSLKATWTN (192 aa)) are cleaved as a propeptide — removed in mature form.

Ca(2+) serves as cofactor. Autocatalytically processed.

Its subcellular location is the secreted. It catalyses the reaction Cleavage of casein.. With respect to regulation, inhibited by 1,2-epoxy-3-(p-nitrophenoxy)propane (EPNP), but not by pepstatin, pepstatin Ac (S-PI) and diazoacetyl-DL-norleucine methyl ester (DAN). Not inhibited by metal ions. Functionally, pepstatin-insensitive serine-carboxyl proteinase. Shows activity on acid-denatured hemoglobin and on casein. The chain is Xanthomonalisin from Xanthomonas sp. (strain T-22).